A 360-amino-acid chain; its full sequence is Photosystem II protein D1 (360 aa).

The Cytoplasmic segment spans residues 1–28 (MTTTLQRRESANLWERFCNWVTSTDNRL). The helical transmembrane segment at 29–46 (YVGWFGVIMIPTLLAATI) threads the bilayer. The Lumenal segment spans residues 47–117 (CFVIAFIAAP…NGGPYQLIIF (71 aa)). Position 118 (histidine 118) interacts with chlorophyll a. A helical membrane pass occupies residues 118–133 (HFLLGASCYMGRQWEL). Residues tyrosine 126 and glutamine 130 each coordinate pheophytin a. Topologically, residues 134-141 (SYRLGMRP) are cytoplasmic. The helical transmembrane segment at 142–156 (WICVAYSAPLASAFA) threads the bilayer. Tyrosine 147 is a binding site for pheophytin a. At 157 to 196 (VFLIYPIGQGSFSDGMPLGISGTFNFMIVFQAEHNILMHP) the chain is on the lumenal side. [CaMn4O5] cluster-binding residues include aspartate 170 and glutamate 189. A helical membrane pass occupies residues 197–218 (FHQLGVAGVFGGALFCAMHGSL). Histidine 198 is a chlorophyll a binding site. A pheophytin a-binding site is contributed by methionine 214. Residues histidine 215 and 264–265 (SF) each bind a quinone. Histidine 215 is a binding site for Fe cation. The Cytoplasmic portion of the chain corresponds to 219–273 (VTSSLIRETTETESANYGYKFGQEEETYNIVAAHGYFGRLIFQYASFNNSRSLHF). Histidine 272 provides a ligand contact to Fe cation. Residues 274-288 (FLAAWRVVGVWFAAL) traverse the membrane as a helical segment. The Lumenal portion of the chain corresponds to 289 to 360 (GISTMAFNLN…VAMIAPSING (72 aa)). [CaMn4O5] cluster is bound by residues histidine 332, glutamate 333, aspartate 342, and alanine 344. Positions 345-360 (SAESAPVAMIAPSING) are excised as a propeptide.

This sequence belongs to the reaction center PufL/M/PsbA/D family. As to quaternary structure, PSII is composed of 1 copy each of membrane proteins PsbA, PsbB, PsbC, PsbD, PsbE, PsbF, PsbH, PsbI, PsbJ, PsbK, PsbL, PsbM, PsbT, PsbX, PsbY, PsbZ, Psb30/Ycf12, peripheral proteins PsbO, CyanoQ (PsbQ), PsbU, PsbV and a large number of cofactors. It forms dimeric complexes. The D1/D2 heterodimer binds P680, chlorophylls that are the primary electron donor of PSII, and subsequent electron acceptors. It shares a non-heme iron and each subunit binds pheophytin, quinone, additional chlorophylls, carotenoids and lipids. D1 provides most of the ligands for the Mn4-Ca-O5 cluster of the oxygen-evolving complex (OEC). There is also a Cl(-1) ion associated with D1 and D2, which is required for oxygen evolution. The PSII complex binds additional chlorophylls, carotenoids and specific lipids. is required as a cofactor. Post-translationally, C-terminally processed by CtpA; processing is essential to allow assembly of the oxygen-evolving complex and thus photosynthetic growth. In terms of processing, tyr-161 forms a radical intermediate that is referred to as redox-active TyrZ, YZ or Y-Z.

The protein resides in the cellular thylakoid membrane. The enzyme catalyses 2 a plastoquinone + 4 hnu + 2 H2O = 2 a plastoquinol + O2. Photosystem II (PSII) is a light-driven water:plastoquinone oxidoreductase that uses light energy to abstract electrons from H(2)O, generating O(2) and a proton gradient subsequently used for ATP formation. It consists of a core antenna complex that captures photons, and an electron transfer chain that converts photonic excitation into a charge separation. The D1/D2 (PsbA/PsbD) reaction center heterodimer binds P680, the primary electron donor of PSII as well as several subsequent electron acceptors. In Thermostichus vulcanus (Synechococcus vulcanus), this protein is Photosystem II protein D1.